A 298-amino-acid polypeptide reads, in one-letter code: MGPAEAGFGDYVALLKPRVMSLVVFTAFVGLWIAPQPVNPFVAFCAVLFIALGGGASGALNMWYDADIDAVMRRTAGRPVPSGRVTSQEPLAVGIALSGLSVMMLGAGGNWFAAGFLAFTIFFYAVVYTIWLKRSTPQNIVIGGAAGAFPPMIGWALPTGGIGIESLLMFALIFFWTPPHFWALALFMKDDYSKAGVPMLTVTHGRKVTRCHIFAYTLVLAPFALWLGFTSVGGPLYLAVSVVLNALFIAGGWQILRRSEDQAQADGYRVEKRYFRLSLYYTFLHFLALLVQHWVGGW.

A run of 9 helical transmembrane segments spans residues 19–39, 40–60, 91–111, 112–132, 140–160, 167–187, 213–233, 236–256, and 277–297; these read VMSLVVFTAFVGLWIAPQPVN, PFVAFCAVLFIALGGGASGAL, LAVGIALSGLSVMMLGAGGNW, FAAGFLAFTIFFYAVVYTIWL, IVIGGAAGAFPPMIGWALPTG, LLMFALIFFWTPPHFWALALF, IFAYTLVLAPFALWLGFTSVG, LYLAVSVVLNALFIAGGWQIL, and LSLYYTFLHFLALLVQHWVGG.

It belongs to the UbiA prenyltransferase family. Protoheme IX farnesyltransferase subfamily. As to quaternary structure, interacts with CtaA.

Its subcellular location is the cell inner membrane. The enzyme catalyses heme b + (2E,6E)-farnesyl diphosphate + H2O = Fe(II)-heme o + diphosphate. The protein operates within porphyrin-containing compound metabolism; heme O biosynthesis; heme O from protoheme: step 1/1. Functionally, converts heme B (protoheme IX) to heme O by substitution of the vinyl group on carbon 2 of heme B porphyrin ring with a hydroxyethyl farnesyl side group. This Paracoccus denitrificans protein is Protoheme IX farnesyltransferase.